Reading from the N-terminus, the 150-residue chain is uncharacterized protein (150 aa).

The signal sequence occupies residues 1–28; the sequence is MPLDVWIAFSYFIDFFQWLFMLNAEVMR.

This is an uncharacterized protein from Archaeoglobus fulgidus (strain ATCC 49558 / DSM 4304 / JCM 9628 / NBRC 100126 / VC-16).